The chain runs to 1677 residues: Vitellogenin (1677 aa).

The first 8 residues, 1 to 8 (LTIALVGS), serve as a signal peptide directing secretion. The region spanning 17–655 (FSGSKTYQYK…NAASILPSAV (639 aa)) is the Vitellogenin domain. 2 disordered regions span residues 1089–1232 (TLRG…SEEI) and 1252–1280 (FQNK…SKQD). Positions 1098-1122 (SSSSSSSSSSSSSSSSSSSSSSQQS) are enriched in low complexity. Positions 1123-1145 (RMEKRMEQDKLTENLERDRDHMR) are enriched in basic and acidic residues. Low complexity predominate over residues 1169 to 1196 (SSSSSSSSSSSGSNSSSSSSSSSSSSSR). N-linked (GlcNAc...) asparagine glycans are attached at residues Asn-1182, Asn-1202, Asn-1217, and Asn-1218. A compositionally biased stretch (basic residues) spans 1197 to 1212 (SHNHRNNTRTLSKSKR). 2 stretches are compositionally biased toward low complexity: residues 1215–1229 (NNNN…SSSS) and 1260–1273 (SSSS…SSQS). The region spanning 1490 to 1675 (SKCVAQENKF…TATEAASFCV (186 aa)) is the VWFD domain. 2 disulfides stabilise this stretch: Cys-1492-Cys-1631 and Cys-1515-Cys-1674. Basic and acidic residues predominate over residues 1636-1649 (GERRKEFRMPDGRQ). The disordered stretch occupies residues 1636–1659 (GERRKEFRMPDGRQARGPSVSPTP).

In terms of processing, phosvitin, an egg yolk storage protein, is one of the most highly phosphorylated (10%) proteins in nature. Found in liver, testis and undifferentiated gonads of estrogen-treated fish. Not detected in the brain and spleen.

In terms of biological role, precursor of the major egg-yolk proteins that are sources of nutrients during early development of oviparous organisms. This chain is Vitellogenin, found in Acipenser transmontanus (White sturgeon).